The primary structure comprises 75 residues: Dermaseptin-DA2 (75 aa).

The first 22 residues, 1-22 (MALVKKSLFLVLFLGLVSLSIC), serve as a signal peptide directing secretion. Residues 23–42 (EEKRENEDEEEQEDDEQSEE) constitute a propeptide that is removed on maturation.

The protein belongs to the frog skin active peptide (FSAP) family. Dermaseptin subfamily. In terms of tissue distribution, expressed by the skin glands.

It localises to the secreted. Possesses a potent antimicrobial activity against Gram-positive and Gram-negative bacteria. Probably acts by disturbing membrane functions with its amphipathic structure. The polypeptide is Dermaseptin-DA2 (Agalychnis dacnicolor (Giant Mexican leaf frog)).